Consider the following 325-residue polypeptide: Protease HtpX homolog 2 (325 aa).

Helical transmembrane passes span 17-37 (IAILVLGFALIYGILGYFFGF) and 42-62 (LLITGALAFVTIFTILQWLFG). Histidine 146 is a binding site for Zn(2+). The active site involves glutamate 147. Histidine 150 is a binding site for Zn(2+). 2 helical membrane passes run 158–178 (LLLAVGLIPTLLYWIGYGLWW) and 195–215 (ILFLIGIALIAFSFLFNLFVL). Glutamate 222 provides a ligand contact to Zn(2+).

This sequence belongs to the peptidase M48B family. Requires Zn(2+) as cofactor.

It localises to the cell membrane. The sequence is that of Protease HtpX homolog 2 from Sulfurisphaera tokodaii (strain DSM 16993 / JCM 10545 / NBRC 100140 / 7) (Sulfolobus tokodaii).